A 311-amino-acid chain; its full sequence is Porphobilinogen deaminase (311 aa).

C241 is subject to S-(dipyrrolylmethanemethyl)cysteine.

This sequence belongs to the HMBS family. In terms of assembly, monomer. The cofactor is dipyrromethane.

The enzyme catalyses 4 porphobilinogen + H2O = hydroxymethylbilane + 4 NH4(+). It participates in porphyrin-containing compound metabolism; protoporphyrin-IX biosynthesis; coproporphyrinogen-III from 5-aminolevulinate: step 2/4. In terms of biological role, tetrapolymerization of the monopyrrole PBG into the hydroxymethylbilane pre-uroporphyrinogen in several discrete steps. The protein is Porphobilinogen deaminase of Carboxydothermus hydrogenoformans (strain ATCC BAA-161 / DSM 6008 / Z-2901).